Reading from the N-terminus, the 213-residue chain is Uracil phosphoribosyltransferase (213 aa).

5-phospho-alpha-D-ribose 1-diphosphate-binding positions include Arg77, Arg102, and Asp129–Ser137. Residues Ile198 and Gly203–Ala205 each bind uracil. Asp204 is a binding site for 5-phospho-alpha-D-ribose 1-diphosphate.

It belongs to the UPRTase family. It depends on Mg(2+) as a cofactor.

The enzyme catalyses UMP + diphosphate = 5-phospho-alpha-D-ribose 1-diphosphate + uracil. It functions in the pathway pyrimidine metabolism; UMP biosynthesis via salvage pathway; UMP from uracil: step 1/1. With respect to regulation, allosterically activated by GTP. Functionally, catalyzes the conversion of uracil and 5-phospho-alpha-D-ribose 1-diphosphate (PRPP) to UMP and diphosphate. The polypeptide is Uracil phosphoribosyltransferase (Mycobacteroides abscessus (strain ATCC 19977 / DSM 44196 / CCUG 20993 / CIP 104536 / JCM 13569 / NCTC 13031 / TMC 1543 / L948) (Mycobacterium abscessus)).